The following is a 77-amino-acid chain: Translation initiation factor IF-1, chloroplastic (77 aa).

Residues 1–71 (MKEQKWIHEG…TKGRIIYRIR (71 aa)) enclose the S1-like domain.

This sequence belongs to the IF-1 family. As to quaternary structure, component of the 30S ribosomal translation pre-initiation complex which assembles on the 30S ribosome in the order IF-2 and IF-3, IF-1 and N-formylmethionyl-tRNA(fMet); mRNA recruitment can occur at any time during PIC assembly.

The protein resides in the plastid. It localises to the chloroplast. Functionally, one of the essential components for the initiation of protein synthesis. Stabilizes the binding of IF-2 and IF-3 on the 30S subunit to which N-formylmethionyl-tRNA(fMet) subsequently binds. Helps modulate mRNA selection, yielding the 30S pre-initiation complex (PIC). Upon addition of the 50S ribosomal subunit IF-1, IF-2 and IF-3 are released leaving the mature 70S translation initiation complex. The sequence is that of Translation initiation factor IF-1, chloroplastic from Vitis vinifera (Grape).